We begin with the raw amino-acid sequence, 192 residues long: MVTMVPPLFFVCALFFAEGIGLDRLCIAALSPRCTLFHTCRFLFLGGILITGNWVCIHYVYDPLALRFLTPLGVGASAFCLSTCSGKLSRTCTSHRAQSEWGLLYALVFYITYTALNLFEALVMWGVSCVGFLCFSTILRAIHQRITQGNGTAVEKTAALLLASMGFIALSLYGTDELWLFPIPAAGMRTRL.

The next 6 membrane-spanning stretches (helical) occupy residues 5 to 22 (VPPL…GIGL), 42 to 61 (FLFL…HYVY), 66 to 88 (LRFL…SGKL), 101 to 118 (WGLL…ALNL), 122 to 139 (LVMW…STIL), and 159 to 181 (ALLL…LWLF).

The protein resides in the cell membrane. This is an uncharacterized protein from Treponema pallidum (strain Nichols).